The following is a 245-amino-acid chain: tRNA (guanine-N(1)-)-methyltransferase (245 aa).

S-adenosyl-L-methionine-binding positions include Gly-111 and 131–136 (IGDYVL).

This sequence belongs to the RNA methyltransferase TrmD family. As to quaternary structure, homodimer.

Its subcellular location is the cytoplasm. The catalysed reaction is guanosine(37) in tRNA + S-adenosyl-L-methionine = N(1)-methylguanosine(37) in tRNA + S-adenosyl-L-homocysteine + H(+). In terms of biological role, specifically methylates guanosine-37 in various tRNAs. The polypeptide is tRNA (guanine-N(1)-)-methyltransferase (Caldicellulosiruptor saccharolyticus (strain ATCC 43494 / DSM 8903 / Tp8T 6331)).